Reading from the N-terminus, the 466-residue chain is Integrator complex subunit 12 (466 aa).

The interval 41 to 101 is disordered; the sequence is KGNDSVYRPQ…EAEKRSADKM (61 aa). Over residues 69–84 the composition is skewed to low complexity; that stretch reads KASSSTPSSSMLSKPL. Residues 85–101 are compositionally biased toward basic and acidic residues; it reads TSEKLKKEAEKRSADKM. The PHD-type zinc-finger motif lies at 156 to 212; the sequence is GLACVVCRQMTVFSGNQLVECQECHNLYHQDCHKPQVTDKDVNDPRLVWYCARCTRQ. 2 disordered regions span residues 216-251 and 311-466; these read MAQK…ELKA and GTSS…KLKK. Composition is skewed to polar residues over residues 218–233 and 311–329; these read QKNQ…SAVS and GTSS…SVQK. Positions 338–373 are enriched in low complexity; the sequence is PSKPGSVSKSGSGGSSSSSTIPIKPLPPLILGKTGL. Positions 374-386 are enriched in polar residues; that stretch reads SRSMSSDNVSKTG. Over residues 392-423 the composition is skewed to low complexity; it reads PSSAGSVSSLSSQLGSNNGSSSAAGSNVTSSN. The span at 453 to 466 shows a compositional bias: basic residues; the sequence is QMVKKKAAQKKLKK.

Belongs to the Integrator subunit 12 family. In terms of assembly, component of the Integrator complex, composed of core subunits INTS1, INTS2, INTS3, INTS4, INTS5, INTS6, INTS7, INTS8, INTS9/RC74, INTS10, INTS11/CPSF3L, INTS12, INTS13, INTS14 and INTS15. The core complex associates with protein phosphatase 2A subunits PPP2CA and PPP2R1A, to form the Integrator-PP2A (INTAC) complex.

It localises to the nucleus. Component of the integrator complex, a multiprotein complex that terminates RNA polymerase II (Pol II) transcription in the promoter-proximal region of genes. The integrator complex provides a quality checkpoint during transcription elongation by driving premature transcription termination of transcripts that are unfavorably configured for transcriptional elongation: the complex terminates transcription by (1) catalyzing dephosphorylation of the C-terminal domain (CTD) of Pol II subunit POLR2A/RPB1 and SUPT5H/SPT5, (2) degrading the exiting nascent RNA transcript via endonuclease activity and (3) promoting the release of Pol II from bound DNA. The integrator complex is also involved in terminating the synthesis of non-coding Pol II transcripts, such as enhancer RNAs (eRNAs), small nuclear RNAs (snRNAs), telomerase RNAs and long non-coding RNAs (lncRNAs). This Xenopus tropicalis (Western clawed frog) protein is Integrator complex subunit 12 (ints12).